The following is a 450-amino-acid chain: tRNA-2-methylthio-N(6)-dimethylallyladenosine synthase (450 aa).

Positions 3-118 (KKVFIKTFGC…LPELLQQRER (116 aa)) constitute an MTTase N-terminal domain. [4Fe-4S] cluster contacts are provided by Cys-12, Cys-49, Cys-81, Cys-155, Cys-159, and Cys-162. In terms of domain architecture, Radical SAM core spans 141 to 376 (SVQGASAFVS…VIDTHIRSIS (236 aa)). The region spanning 377–440 (ASRVGTVQRI…AYTLRGQYCA (64 aa)) is the TRAM domain.

It belongs to the methylthiotransferase family. MiaB subfamily. Monomer. The cofactor is [4Fe-4S] cluster.

It localises to the cytoplasm. It catalyses the reaction N(6)-dimethylallyladenosine(37) in tRNA + (sulfur carrier)-SH + AH2 + 2 S-adenosyl-L-methionine = 2-methylsulfanyl-N(6)-dimethylallyladenosine(37) in tRNA + (sulfur carrier)-H + 5'-deoxyadenosine + L-methionine + A + S-adenosyl-L-homocysteine + 2 H(+). Functionally, catalyzes the methylthiolation of N6-(dimethylallyl)adenosine (i(6)A), leading to the formation of 2-methylthio-N6-(dimethylallyl)adenosine (ms(2)i(6)A) at position 37 in tRNAs that read codons beginning with uridine. This Verminephrobacter eiseniae (strain EF01-2) protein is tRNA-2-methylthio-N(6)-dimethylallyladenosine synthase.